The chain runs to 289 residues: Vesicular-fusion protein SEC17 (289 aa).

This sequence belongs to the SNAP family.

The protein resides in the membrane. Required for vesicular transport between the endoplasmic reticulum and the Golgi apparatus. This chain is Vesicular-fusion protein SEC17 (SEC17), found in Coprinopsis cinerea (strain Okayama-7 / 130 / ATCC MYA-4618 / FGSC 9003) (Inky cap fungus).